The sequence spans 82 residues: Delta-actitoxin-Aeq2c (82 aa).

A signal peptide spans 1-19; sequence MNRLMILVFAAVFLALASA. Residues 20-26 constitute a propeptide that is removed on maturation; it reads DEDVDIA. Cystine bridges form between C32–C79, C34–C69, and C62–C80.

The protein belongs to the sea anemone sodium channel inhibitory toxin family. Type I subfamily.

Its subcellular location is the secreted. It localises to the nematocyst. Its function is as follows. Binds specifically to voltage-gated sodium channels (Nav), thereby delaying their inactivation during signal transduction. Causes death to crabs. This is Delta-actitoxin-Aeq2c from Actinia equina (Beadlet anemone).